Consider the following 70-residue polypeptide: Large ribosomal subunit protein uL29 (70 aa).

Belongs to the universal ribosomal protein uL29 family.

In Prochlorococcus marinus (strain MIT 9303), this protein is Large ribosomal subunit protein uL29.